The following is an 883-amino-acid chain: NF-X1-type zinc finger protein NFXL2 (883 aa).

Residues 1–10 (MTNMAGTATT) are compositionally biased toward polar residues. Positions 1-44 (MTNMAGTATTEFRWKSPPQPPSQEQPISDSDSDSGSDSENHQHR) are disordered. The segment at 87 to 152 (CLICLERIKR…EAVWNCPKCR (66 aa)) adopts an RING-type; degenerate zinc-finger fold. NF-X1-type zinc fingers lie at residues 198–216 (CGHCCLLLCHPGPCASCPK), 250–269 (CNIHNCREICHDGECPPCRE), 303–322 (CGKHVCERGCHAGECGLCPY), 357–377 (CGYHRCPERCHRGPCLETCRI), 410–429 (CARHACRRRCCDGECPPCSE), 437–456 (CRNHKCQSPCHQGPCAPCPI), 494–515 (CRHGQNQKPHKCHYGACPPCRL), 523–568 (CGHK…RCPE), 605–636 (CGNHYCSYFCHALDIRSSSLDKRSESCEKCDL), 646–664 (CQHPCPRRCHPEDCPPCKT), and 709–738 (CTHLCPEICHPGQCPLPEKCGKKVVVRCKC). A disordered region spans residues 798–824 (EIEEKEEPSGKNASKRRKRRGRGQDIQ). A helical transmembrane segment spans residues 841 to 863 (MVVMLVAMLAAVSYYGYKGLLWL).

This sequence belongs to the NFX1 family. In terms of assembly, interacts with ADO1/ZTL. As to expression, constitutively expressed in mesophyll and guard cells.

The protein resides in the nucleus. It localises to the membrane. It functions in the pathway protein modification; protein ubiquitination. Functionally, probable transcriptional regulator. May mediate E2- or E3-dependent ubiquitination. Required to gate light sensitivity during the night. Regulates the speed of the clock by acting in the feedback loop between CCA1, LHY and APRR1/TOC1. Promotes the expression of CCA1 at night but not by days. This activational effect is enhanced by interaction with ADO1/ZTL. Association with ADO1/ZTL is not leading to the degradation of NFXL2. Confers sensitivity to osmotic stress such as high salinity. Prevents H(2)O(2) production and abscisic acid accumulation. Part of a regulatory network that integrates the biosynthesis and action of abscisic acid, reactive oxygen species and cuticle components. This Arabidopsis thaliana (Mouse-ear cress) protein is NF-X1-type zinc finger protein NFXL2 (NFXL2).